A 649-amino-acid polypeptide reads, in one-letter code: Golgin subfamily A member 6-like protein 26 (649 aa).

Disordered regions lie at residues 1–94 (MWPQ…HQEA), 300–330 (QEEKIREQEEKMRRQEEMMWEKEEKMRRQEE), 358–440 (EKMH…EMWR), 455–572 (KEKM…REQE), and 584–620 (EQEEMMQEQEEKMWEQEEKMCEQEEKMQEQEEKMRRQ). Residues 10-23 (HPHLPTHPHLPTHP) show a composition bias toward low complexity. Residues 25–46 (MSKETRQSKLAEAKEQLTDHHP) show a composition bias toward basic and acidic residues. Composition is skewed to polar residues over residues 47–57 (QTNPSVGTAAS) and 65–77 (NNGTNPETTTSGG). Residues 80-94 (SPEDEQKASHQHQEA) are compositionally biased toward basic and acidic residues. Residues 151-644 (LEQALSAVAT…EEKMQEHQEH (494 aa)) are a coiled coil.

Belongs to the GOLGA6 family.

The polypeptide is Golgin subfamily A member 6-like protein 26 (GOLGA6L26) (Homo sapiens (Human)).